The following is a 164-amino-acid chain: Ribosome maturation factor RimP (164 aa).

The protein belongs to the RimP family.

The protein localises to the cytoplasm. Required for maturation of 30S ribosomal subunits. The sequence is that of Ribosome maturation factor RimP from Cellvibrio japonicus (strain Ueda107) (Pseudomonas fluorescens subsp. cellulosa).